The primary structure comprises 440 residues: Adenylosuccinate synthetase (440 aa).

GTP contacts are provided by residues 14–20 and 42–44; these read GDEGKGK and GHT. The active-site Proton acceptor is aspartate 15. Residues aspartate 15 and glycine 42 each contribute to the Mg(2+) site. IMP-binding positions include 15 to 18, 40 to 43, threonine 131, arginine 145, glutamine 226, threonine 241, and arginine 313; these read DEGK and NAGH. Histidine 43 serves as the catalytic Proton donor. 309-315 provides a ligand contact to substrate; sequence ATTGRQR. GTP is bound by residues arginine 315, 341-343, and 423-425; these read KLD and STG.

It belongs to the adenylosuccinate synthetase family. As to quaternary structure, homodimer. Requires Mg(2+) as cofactor.

It localises to the cytoplasm. The enzyme catalyses IMP + L-aspartate + GTP = N(6)-(1,2-dicarboxyethyl)-AMP + GDP + phosphate + 2 H(+). It functions in the pathway purine metabolism; AMP biosynthesis via de novo pathway; AMP from IMP: step 1/2. In terms of biological role, plays an important role in the de novo pathway of purine nucleotide biosynthesis. Catalyzes the first committed step in the biosynthesis of AMP from IMP. The polypeptide is Adenylosuccinate synthetase (Hydrogenovibrio crunogenus (strain DSM 25203 / XCL-2) (Thiomicrospira crunogena)).